Reading from the N-terminus, the 811-residue chain is Probable disease resistance protein At5g04720 (811 aa).

Positions 1-147 constitute an RPW8 domain; that stretch reads MADIIGGEVV…KVDSLNEKLG (147 aa). NB-ARC domains are found at residues 180-242 and 312-437; these read VGLD…VSQS and TYDV…NVLV. 207–214 contacts ATP; it reads GMSGSGKT. LRR repeat units follow at residues 650–674, 676–699, 700–722, 724–746, and 748–769; these read FPKL…ICGI, SLNS…SKLK, ALQL…ICEL, RLKY…IGKV, and TLEK…VVLL.

Belongs to the disease resistance NB-LRR family.

Its function is as follows. Probable disease resistance protein. This chain is Probable disease resistance protein At5g04720, found in Arabidopsis thaliana (Mouse-ear cress).